A 109-amino-acid polypeptide reads, in one-letter code: Nucleoid-associated protein Psyc_0793 (109 aa).

It belongs to the YbaB/EbfC family. Homodimer.

The protein resides in the cytoplasm. Its subcellular location is the nucleoid. Functionally, binds to DNA and alters its conformation. May be involved in regulation of gene expression, nucleoid organization and DNA protection. This chain is Nucleoid-associated protein Psyc_0793, found in Psychrobacter arcticus (strain DSM 17307 / VKM B-2377 / 273-4).